We begin with the raw amino-acid sequence, 507 residues long: Beta-Ala-His dipeptidase (507 aa).

The signal sequence occupies residues 1–26; sequence MDPKLGRMAASLLAVLLLLLERGMFS. Histidine 132 contacts Zn(2+). Aspartate 134 is an active-site residue. Aspartate 165 contacts Zn(2+). Glutamate 199 (proton acceptor) is an active-site residue. Glutamate 200 contacts Zn(2+). The residue at position 219 (serine 219) is a Phosphoserine. Aspartate 228 contacts Zn(2+). Asparagine 322 and asparagine 382 each carry an N-linked (GlcNAc...) asparagine glycan. Histidine 478 serves as a coordination point for Zn(2+).

It belongs to the peptidase M20A family. As to quaternary structure, homodimer. Zn(2+) is required as a cofactor. In terms of tissue distribution, found in serum and adult nervous central system. Absent in serum from patients with homocarnosinosis.

Its subcellular location is the secreted. The enzyme catalyses Preferential hydrolysis of the beta-Ala-|-His dipeptide (carnosine), and also anserine, Xaa-|-His dipeptides and other dipeptides including homocarnosine.. The catalysed reaction is carnosine + H2O = beta-alanine + L-histidine. It catalyses the reaction anserine + H2O = N(pros)-methyl-L-histidine + beta-alanine. It carries out the reaction L-alanyl-L-histidine + H2O = L-histidine + L-alanine. The enzyme catalyses glycyl-L-histidine + H2O = L-histidine + glycine. The catalysed reaction is L-homocarnosine + H2O = 4-aminobutanoate + L-histidine. Activated by cadmium ions. Inhibited by the metal chelator 1,10-o-phenantrolin. The inhibitory concentration 50% (IC(50)) is 5 uM. Catalyzes the peptide bond hydrolysis in Xaa-His dipeptides, displaying the highest activity toward carnosine (beta-alanyl-L-histidine) and anserine (beta-alanyl-3-methyl-histidine). This is Beta-Ala-His dipeptidase from Homo sapiens (Human).